Consider the following 600-residue polypeptide: Aspartate--tRNA(Asp/Asn) ligase (600 aa).

E181 serves as a coordination point for L-aspartate. The segment at 205-208 (QQFK) is aspartate. R227 lines the L-aspartate pocket. ATP is bound by residues 227–229 (RDE) and Q236. Residue H455 coordinates L-aspartate. ATP is bound at residue E489. R496 is a binding site for L-aspartate. 541–544 (GIDR) is a binding site for ATP.

Belongs to the class-II aminoacyl-tRNA synthetase family. Type 1 subfamily. As to quaternary structure, homodimer.

It is found in the cytoplasm. It carries out the reaction tRNA(Asx) + L-aspartate + ATP = L-aspartyl-tRNA(Asx) + AMP + diphosphate. Its function is as follows. Aspartyl-tRNA synthetase with relaxed tRNA specificity since it is able to aspartylate not only its cognate tRNA(Asp) but also tRNA(Asn). Reaction proceeds in two steps: L-aspartate is first activated by ATP to form Asp-AMP and then transferred to the acceptor end of tRNA(Asp/Asn). The chain is Aspartate--tRNA(Asp/Asn) ligase from Rubrobacter xylanophilus (strain DSM 9941 / JCM 11954 / NBRC 16129 / PRD-1).